Reading from the N-terminus, the 320-residue chain is Endolytic peptidoglycan transglycosylase RlpA (320 aa).

This sequence belongs to the RlpA family.

Lytic transglycosylase with a strong preference for naked glycan strands that lack stem peptides. The sequence is that of Endolytic peptidoglycan transglycosylase RlpA from Rickettsia typhi (strain ATCC VR-144 / Wilmington).